The sequence spans 327 residues: Regulatory protein MsrR (327 aa).

Residues 1–18 are compositionally biased toward basic and acidic residues; that stretch reads MDKETNDNEYRRQSEHRT. The disordered stretch occupies residues 1–24; the sequence is MDKETNDNEYRRQSEHRTSAPKRK. The Cytoplasmic segment spans residues 1–31; sequence MDKETNDNEYRRQSEHRTSAPKRKKKKKIRK. Residues 32–52 traverse the membrane as a helical; Signal-anchor for type II membrane protein segment; it reads LPIILLIVVILLIALVVYIVH. Over 53–327 the chain is Extracellular; that stretch reads SYNSGVEYAK…QAIKDFLDED (275 aa).

The protein belongs to the LytR/CpsA/Psr (LCP) family.

The protein localises to the cell membrane. Its function is as follows. Involved in SarA attenuation. Affects resistance to oxacillin and teicoplanin, as well as the synthesis of virulence factors. In Staphylococcus aureus (strain NCTC 8325 / PS 47), this protein is Regulatory protein MsrR (msrR).